A 334-amino-acid chain; its full sequence is MNMEGPLRPRLVNCSDFQFGVVTTETIENALLHLAQQNEQAVKEAAGRTGSFRETRIVEFVFLLSEQWCLEKSVSYQAVEILERFMLKQAEDICRQATLQLRGKDTELQSWRAMKEQLVNKFILRLVSCVQLASKLSFHYKIVSNITVLNFLQALGYVHTKEELLESELDILKSLNFQINLPTPLAYVEMLLEVLGYNGCLVPATQLHATCLTLLDLVYLLHEPIYESLLRASIENSTPSQLQGEKFLSVKEDFMLLAVGIIAASAFIQNHECWSQVIGHLQSITGIASESIAEFSYAILTHSVGANTPGPQQPVPHKAARALRTAAAAASSNT.

A Cyclin N-terminal domain is found at 29-180 (NALLHLAQQN…ILKSLNFQIN (152 aa)).

In terms of assembly, interacts with PRR19; this interaction promotes crossover formation. Interacts with RFC3 and RFC4; these interactions facilitate crossover formation. Interacts with CDC34; this interaction regulates the cell-cycle progression. Isoform 2 is expressed in spermatocyte.

It localises to the nucleus. Its subcellular location is the cytoplasm. The protein resides in the chromosome. In terms of biological role, plays a role in the different steps of crossover formation during meiotic recombination. Participates in the crossover differentiation step of crossover-specific recombination intermediates through its interaction with PRR19. In addition, stimulates crossover formation through the interactions with RFC3 and RFC4 and simultaneously regulates cell-cycle progression through interactions with CDC34 and subsequent ubiquitination of WEE1. May also participates in an active deselection process that destabilizes or removes excess pre-CO intermediates. This is Cyclin N-terminal domain-containing protein 1 from Mus musculus (Mouse).